Consider the following 308-residue polypeptide: Ribosomal RNA large subunit methyltransferase F (308 aa).

The protein belongs to the methyltransferase superfamily. METTL16/RlmF family.

The protein resides in the cytoplasm. It carries out the reaction adenosine(1618) in 23S rRNA + S-adenosyl-L-methionine = N(6)-methyladenosine(1618) in 23S rRNA + S-adenosyl-L-homocysteine + H(+). In terms of biological role, specifically methylates the adenine in position 1618 of 23S rRNA. This chain is Ribosomal RNA large subunit methyltransferase F, found in Escherichia coli O157:H7.